A 268-amino-acid polypeptide reads, in one-letter code: NADH-quinone oxidoreductase subunit B 2 (268 aa).

4 residues coordinate [4Fe-4S] cluster: Cys42, Cys43, Cys108, and Cys138. The tract at residues 237-268 is disordered; it reads SPNKAKGVAPEIRHNDLKRPAVEVDHARDEQR. Residues 247 to 268 are compositionally biased toward basic and acidic residues; that stretch reads EIRHNDLKRPAVEVDHARDEQR.

The protein belongs to the complex I 20 kDa subunit family. NDH-1 is composed of 14 different subunits. Subunits NuoB, C, D, E, F, and G constitute the peripheral sector of the complex. [4Fe-4S] cluster serves as cofactor.

The protein localises to the cell membrane. It carries out the reaction a quinone + NADH + 5 H(+)(in) = a quinol + NAD(+) + 4 H(+)(out). Functionally, NDH-1 shuttles electrons from NADH, via FMN and iron-sulfur (Fe-S) centers, to quinones in the respiratory chain. The immediate electron acceptor for the enzyme in this species is believed to be ubiquinone. Couples the redox reaction to proton translocation (for every two electrons transferred, four hydrogen ions are translocated across the cytoplasmic membrane), and thus conserves the redox energy in a proton gradient. This Roseiflexus castenholzii (strain DSM 13941 / HLO8) protein is NADH-quinone oxidoreductase subunit B 2.